The sequence spans 522 residues: 2-isopropylmalate synthase (522 aa).

In terms of domain architecture, Pyruvate carboxyltransferase spans 5–267; the sequence is VIIFDTTLRD…ETGINAKEIH (263 aa). 4 residues coordinate Mn(2+): Asp-14, His-202, His-204, and Asn-238. The regulatory domain stretch occupies residues 392–522; that stretch reads QLQQLVVQSD…MQKNRELGGV (131 aa).

This sequence belongs to the alpha-IPM synthase/homocitrate synthase family. LeuA type 1 subfamily. Homodimer. It depends on Mn(2+) as a cofactor.

It is found in the cytoplasm. It catalyses the reaction 3-methyl-2-oxobutanoate + acetyl-CoA + H2O = (2S)-2-isopropylmalate + CoA + H(+). It participates in amino-acid biosynthesis; L-leucine biosynthesis; L-leucine from 3-methyl-2-oxobutanoate: step 1/4. Its function is as follows. Catalyzes the condensation of the acetyl group of acetyl-CoA with 3-methyl-2-oxobutanoate (2-ketoisovalerate) to form 3-carboxy-3-hydroxy-4-methylpentanoate (2-isopropylmalate). This Shewanella baltica (strain OS195) protein is 2-isopropylmalate synthase.